A 100-amino-acid chain; its full sequence is Small ribosomal subunit protein uS14c (100 aa).

This sequence belongs to the universal ribosomal protein uS14 family. Part of the 30S ribosomal subunit.

The protein localises to the plastid. Its subcellular location is the chloroplast. Its function is as follows. Binds 16S rRNA, required for the assembly of 30S particles. In Tupiella akineta (Green alga), this protein is Small ribosomal subunit protein uS14c.